A 312-amino-acid chain; its full sequence is Malate dehydrogenase (312 aa).

Residues 12 to 17 and D36 contribute to the NAD(+) site; that span reads GSGFTG. Substrate is bound by residues R87 and R93. NAD(+) contacts are provided by residues N100 and 123–125; that span reads LTN. A substrate-binding site is contributed by N125. Residue S149 is modified to Phosphoserine. R156 serves as a coordination point for substrate. Catalysis depends on H180, which acts as the Proton acceptor.

The protein belongs to the LDH/MDH superfamily. MDH type 3 family.

The enzyme catalyses (S)-malate + NAD(+) = oxaloacetate + NADH + H(+). In terms of biological role, catalyzes the reversible oxidation of malate to oxaloacetate. The polypeptide is Malate dehydrogenase (Oceanobacillus iheyensis (strain DSM 14371 / CIP 107618 / JCM 11309 / KCTC 3954 / HTE831)).